A 428-amino-acid polypeptide reads, in one-letter code: MKFPKRYAIVLLTFMCTNVCYIERVGFSIAYTVAADAVGTNQANKGMILSMFYYGYVLSQIPGGWAAQRLGGRLVLLLSFVLWSSICAVVPLDPNRVILLVLSRLLVGVAQGLIFPSIHTVLAQWVPPQERSRSVSLTTSGMYLGAACGMLLLPSLVKNMGPQSVFSVEAMLGVAWLLIWFKFASDPPRTDLPKVASKDKMKVQTGGIMAPRTVKIPWARILFSLPIWAIVVNNFTFHYALYVLMNWLPTYFKLGLQLSLQDMGFSKMLPYLNMFLFSNIGGVLADHLITRKILSVTKTRKLLNTVGFVVSAIALMALPLFRTPSGAIFCSSVSLGFLALGRAGFAVNHMDVAPKFAGIVMGISNTAGTLAGIVGVGLTGRILEAAKASNMDLTSSESWRTVFFVPGYLCIFSSFIFLIFSTGEKIFE.

Positions 1–22 (MKFPKRYAIVLLTFMCTNVCYI) are cleaved as a signal peptide. Transmembrane regions (helical) follow at residues 47 to 67 (MILSMFYYGYVLSQIPGGWAA), 74 to 94 (LVLLLSFVLWSSICAVVPLDP), 98 to 118 (ILLVLSRLLVGVAQGLIFPSI), 137 to 157 (LTTSGMYLGAACGMLLLPSLV), 164 to 184 (SVFSVEAMLGVAWLLIWFKFA), 221 to 241 (ILFSLPIWAIVVNNFTFHYAL), 269 to 289 (LPYLNMFLFSNIGGVLADHLI), 301 to 321 (KLLNTVGFVVSAIALMALPLF), 327 to 347 (AIFCSSVSLGFLALGRAGFAV), 356 to 376 (FAGIVMGISNTAGTLAGIVGV), and 401 to 421 (TVFFVPGYLCIFSSFIFLIFS).

This sequence belongs to the major facilitator superfamily. Sodium/anion cotransporter (TC 2.A.1.14) family.

The protein resides in the cell membrane. Functionally, probable anion transporter. The polypeptide is Probable anion transporter 6 (PHT4;6) (Oryza sativa subsp. japonica (Rice)).